Reading from the N-terminus, the 523-residue chain is 3-hydroxybenzoate--CoA ligase (523 aa).

This sequence belongs to the ATP-dependent AMP-binding enzyme family. Benzoate-CoA ligase subfamily.

The catalysed reaction is 3-hydroxybenzoate + ATP + CoA = 3-hydroxybenzoyl-CoA + AMP + diphosphate. It catalyses the reaction 4-hydroxybenzoate + ATP + CoA = 4-hydroxybenzoyl-CoA + AMP + diphosphate. Ligase involved in the anaerobic degradation of 3-hydroxybenzoate (3OHBz). Catalyzes the activation of 3-hydroxybenzoate to 3-hydroxybenzoyl-CoA. Also shows high activity with protocatechuate and 4-hydroxybenzoate. Exhibits lower activity with benzoate, but cannot use 2-hydroxybenzoate or benzoate analogs containing other substituents at the ortho position, such as 2-aminobenzoate (anthranilate). The sequence is that of 3-hydroxybenzoate--CoA ligase from Aromatoleum sp. (strain CIB) (Azoarcus sp. (strain CIB)).